We begin with the raw amino-acid sequence, 212 residues long: Thiamine-phosphate synthase (212 aa).

4-amino-2-methyl-5-(diphosphooxymethyl)pyrimidine-binding positions include 39–43 (QLRIK) and N71. Positions 72 and 91 each coordinate Mg(2+). S110 contacts 4-amino-2-methyl-5-(diphosphooxymethyl)pyrimidine. Residue 136–138 (TQT) participates in 2-[(2R,5Z)-2-carboxy-4-methylthiazol-5(2H)-ylidene]ethyl phosphate binding. K139 provides a ligand contact to 4-amino-2-methyl-5-(diphosphooxymethyl)pyrimidine. Residues G168 and 188–189 (VS) contribute to the 2-[(2R,5Z)-2-carboxy-4-methylthiazol-5(2H)-ylidene]ethyl phosphate site.

This sequence belongs to the thiamine-phosphate synthase family. Requires Mg(2+) as cofactor.

It carries out the reaction 2-[(2R,5Z)-2-carboxy-4-methylthiazol-5(2H)-ylidene]ethyl phosphate + 4-amino-2-methyl-5-(diphosphooxymethyl)pyrimidine + 2 H(+) = thiamine phosphate + CO2 + diphosphate. The catalysed reaction is 2-(2-carboxy-4-methylthiazol-5-yl)ethyl phosphate + 4-amino-2-methyl-5-(diphosphooxymethyl)pyrimidine + 2 H(+) = thiamine phosphate + CO2 + diphosphate. It catalyses the reaction 4-methyl-5-(2-phosphooxyethyl)-thiazole + 4-amino-2-methyl-5-(diphosphooxymethyl)pyrimidine + H(+) = thiamine phosphate + diphosphate. It participates in cofactor biosynthesis; thiamine diphosphate biosynthesis; thiamine phosphate from 4-amino-2-methyl-5-diphosphomethylpyrimidine and 4-methyl-5-(2-phosphoethyl)-thiazole: step 1/1. Functionally, condenses 4-methyl-5-(beta-hydroxyethyl)thiazole monophosphate (THZ-P) and 2-methyl-4-amino-5-hydroxymethyl pyrimidine pyrophosphate (HMP-PP) to form thiamine monophosphate (TMP). This Serratia proteamaculans (strain 568) protein is Thiamine-phosphate synthase.